Here is a 432-residue protein sequence, read N- to C-terminus: Glutamate-1-semialdehyde 2,1-aminomutase 2 (432 aa).

Lys268 is subject to N6-(pyridoxal phosphate)lysine.

This sequence belongs to the class-III pyridoxal-phosphate-dependent aminotransferase family. HemL subfamily. In terms of assembly, homodimer. Pyridoxal 5'-phosphate serves as cofactor.

The protein resides in the cytoplasm. The catalysed reaction is (S)-4-amino-5-oxopentanoate = 5-aminolevulinate. It functions in the pathway porphyrin-containing compound metabolism; protoporphyrin-IX biosynthesis; 5-aminolevulinate from L-glutamyl-tRNA(Glu): step 2/2. The chain is Glutamate-1-semialdehyde 2,1-aminomutase 2 from Listeria innocua serovar 6a (strain ATCC BAA-680 / CLIP 11262).